We begin with the raw amino-acid sequence, 116 residues long: Aspartate 1-decarboxylase (116 aa).

The active-site Schiff-base intermediate with substrate; via pyruvic acid is Ser-25. Ser-25 bears the Pyruvic acid (Ser) mark. Thr-57 contributes to the substrate binding site. The Proton donor role is filled by Tyr-58. 73 to 75 is a substrate binding site; sequence GAA.

It belongs to the PanD family. Heterooctamer of four alpha and four beta subunits. Requires pyruvate as cofactor. Post-translationally, is synthesized initially as an inactive proenzyme, which is activated by self-cleavage at a specific serine bond to produce a beta-subunit with a hydroxyl group at its C-terminus and an alpha-subunit with a pyruvoyl group at its N-terminus.

The protein localises to the cytoplasm. The enzyme catalyses L-aspartate + H(+) = beta-alanine + CO2. Its pathway is cofactor biosynthesis; (R)-pantothenate biosynthesis; beta-alanine from L-aspartate: step 1/1. Catalyzes the pyruvoyl-dependent decarboxylation of aspartate to produce beta-alanine. In Phocaeicola vulgatus (strain ATCC 8482 / DSM 1447 / JCM 5826 / CCUG 4940 / NBRC 14291 / NCTC 11154) (Bacteroides vulgatus), this protein is Aspartate 1-decarboxylase.